Reading from the N-terminus, the 238-residue chain is Ubiquinone biosynthesis O-methyltransferase (238 aa).

Positions 40, 59, 80, and 125 each coordinate S-adenosyl-L-methionine.

This sequence belongs to the methyltransferase superfamily. UbiG/COQ3 family.

The catalysed reaction is a 3-demethylubiquinol + S-adenosyl-L-methionine = a ubiquinol + S-adenosyl-L-homocysteine + H(+). It carries out the reaction a 3-(all-trans-polyprenyl)benzene-1,2-diol + S-adenosyl-L-methionine = a 2-methoxy-6-(all-trans-polyprenyl)phenol + S-adenosyl-L-homocysteine + H(+). Its pathway is cofactor biosynthesis; ubiquinone biosynthesis. O-methyltransferase that catalyzes the 2 O-methylation steps in the ubiquinone biosynthetic pathway. In Paracidovorax citrulli (strain AAC00-1) (Acidovorax citrulli), this protein is Ubiquinone biosynthesis O-methyltransferase.